Reading from the N-terminus, the 130-residue chain is Small ribosomal subunit protein uS11 (130 aa).

This sequence belongs to the universal ribosomal protein uS11 family. As to quaternary structure, part of the 30S ribosomal subunit. Interacts with proteins S7 and S18. Binds to IF-3.

Its function is as follows. Located on the platform of the 30S subunit, it bridges several disparate RNA helices of the 16S rRNA. Forms part of the Shine-Dalgarno cleft in the 70S ribosome. The sequence is that of Small ribosomal subunit protein uS11 from Thiobacillus denitrificans (strain ATCC 25259 / T1).